We begin with the raw amino-acid sequence, 250 residues long: Geranylgeranylglyceryl phosphate synthase (250 aa).

Mg(2+)-binding residues include Asp-23 and Ser-52. Residues 170-176 (YIEAGSG), 202-203 (GG), and 224-225 (GT) each bind sn-glycerol 1-phosphate.

The protein belongs to the GGGP/HepGP synthase family. Group II subfamily. Mg(2+) serves as cofactor.

It localises to the cytoplasm. The enzyme catalyses sn-glycerol 1-phosphate + (2E,6E,10E)-geranylgeranyl diphosphate = sn-3-O-(geranylgeranyl)glycerol 1-phosphate + diphosphate. It functions in the pathway membrane lipid metabolism; glycerophospholipid metabolism. Its function is as follows. Prenyltransferase that catalyzes the transfer of the geranylgeranyl moiety of geranylgeranyl diphosphate (GGPP) to the C3 hydroxyl of sn-glycerol-1-phosphate (G1P). This reaction is the first ether-bond-formation step in the biosynthesis of archaeal membrane lipids. In Methanobrevibacter smithii (strain ATCC 35061 / DSM 861 / OCM 144 / PS), this protein is Geranylgeranylglyceryl phosphate synthase.